A 280-amino-acid polypeptide reads, in one-letter code: Protein YIP4b (280 aa).

Polar residues predominate over residues methionine 1–serine 15. Residues methionine 1–leucine 106 are disordered. The Cytoplasmic portion of the chain corresponds to methionine 1–aspartate 146. A helical transmembrane segment spans residues leucine 147–valine 167. The Lumenal portion of the chain corresponds to lysine 168 to glutamate 171. 2 helical membrane passes run valine 172–leucine 192 and leucine 193–proline 213. At leucine 214–lysine 230 the chain is on the lumenal side. The chain crosses the membrane as a helical span at residues methionine 231–alanine 251. Residues alanine 252–lysine 258 are Cytoplasmic-facing. The helical transmembrane segment at alanine 259 to isoleucine 279 threads the bilayer. Position 280 (asparagine 280) is a topological domain, lumenal.

The protein belongs to the YIP1 family. As to quaternary structure, homodimer and heterodimer with YIP4A. Component of a trans-Golgi network (TGN)-localized ECH/YIP4 complex made of ECH, YIP4A and YIP4B. Interacts directly with ECH. In terms of tissue distribution, expressed in developing root hair cells.

The protein resides in the golgi apparatus. It localises to the trans-Golgi network membrane. In terms of biological role, together with YIP4A, involved in the regulation of cell elongation during root and hypocotyl growth. YIP4A and YIP4B are central trafficking components in Rho-of-plant (ROPs, e.g. ARAC4/ROP2, ARAC5/ROP4 and ARAC3/ROP6) small GTPases-dependent root hair formation, thus contributing to activation and plasma membrane accumulation of ROPs during hair initiation. The ECH/YIP4 complex is involved in the modulation of the trans-Golgi network (TGN)-mediated trafficking of some proteins and cell wall components (e.g. pectin and hemicellulose) to the cell wall in dark-grown hypocotyls and in secretory cells of the seed coat. This Arabidopsis thaliana (Mouse-ear cress) protein is Protein YIP4b.